The sequence spans 243 residues: Pyridoxine 5'-phosphate synthase (243 aa).

3-amino-2-oxopropyl phosphate is bound at residue asparagine 9. 11-12 (DH) is a binding site for 1-deoxy-D-xylulose 5-phosphate. Residue arginine 20 participates in 3-amino-2-oxopropyl phosphate binding. Histidine 45 acts as the Proton acceptor in catalysis. 1-deoxy-D-xylulose 5-phosphate is bound by residues arginine 47 and histidine 52. The active-site Proton acceptor is glutamate 72. Threonine 102 is a 1-deoxy-D-xylulose 5-phosphate binding site. Histidine 193 (proton donor) is an active-site residue. Residues glycine 194 and 215–216 (GH) each bind 3-amino-2-oxopropyl phosphate.

It belongs to the PNP synthase family. Homooctamer; tetramer of dimers.

The protein localises to the cytoplasm. It catalyses the reaction 3-amino-2-oxopropyl phosphate + 1-deoxy-D-xylulose 5-phosphate = pyridoxine 5'-phosphate + phosphate + 2 H2O + H(+). The protein operates within cofactor biosynthesis; pyridoxine 5'-phosphate biosynthesis; pyridoxine 5'-phosphate from D-erythrose 4-phosphate: step 5/5. In terms of biological role, catalyzes the complicated ring closure reaction between the two acyclic compounds 1-deoxy-D-xylulose-5-phosphate (DXP) and 3-amino-2-oxopropyl phosphate (1-amino-acetone-3-phosphate or AAP) to form pyridoxine 5'-phosphate (PNP) and inorganic phosphate. The protein is Pyridoxine 5'-phosphate synthase of Aliivibrio fischeri (strain ATCC 700601 / ES114) (Vibrio fischeri).